Consider the following 138-residue polypeptide: Cysteine desulfuration protein SufE (138 aa).

Cys-51 serves as the catalytic Cysteine persulfide intermediate.

This sequence belongs to the SufE family. In terms of assembly, homodimer. Interacts with SufS.

It localises to the cytoplasm. The protein operates within cofactor biosynthesis; iron-sulfur cluster biosynthesis. Its function is as follows. Participates in cysteine desulfuration mediated by SufS. Cysteine desulfuration mobilizes sulfur from L-cysteine to yield L-alanine and constitutes an essential step in sulfur metabolism for biosynthesis of a variety of sulfur-containing biomolecules. Functions as a sulfur acceptor for SufS, by mediating the direct transfer of the sulfur atom from the S-sulfanylcysteine of SufS, an intermediate product of cysteine desulfuration process. The polypeptide is Cysteine desulfuration protein SufE (Salmonella agona (strain SL483)).